A 1104-amino-acid chain; its full sequence is Carbamoyl phosphate synthase large chain (1104 aa).

Residues 1 to 403 (MPRRQDIQKI…SFQKALRSLE (403 aa)) are carboxyphosphate synthetic domain. The ATP site is built by R129, R170, G176, G177, Q209, L211, E216, G242, I243, H244, Q286, and E300. An ATP-grasp 1 domain is found at 133-329 (NEAMDKIGVK…IAKMAAKLAV (197 aa)). Mg(2+) contacts are provided by Q286, E300, and N302. The Mn(2+) site is built by Q286, E300, and N302. Residues 404-552 (TGRAGWGCDK…YSTYEEETEV (149 aa)) are oligomerization domain. The carbamoyl phosphate synthetic domain stretch occupies residues 553 to 966 (IPASKPKVMI…AFAKAELGAG (414 aa)). The ATP-grasp 2 domain maps to 703-900 (EKILQKLNIS…LAKLASLIMS (198 aa)). Positions 739, 778, 780, 785, 811, 812, 813, 814, 854, and 871 each coordinate ATP. Q854, E871, and N873 together coordinate Mg(2+). Mn(2+)-binding residues include Q854, E871, and N873. Residues 967-1104 (ERLPLTGTVF…KTIQEYCPNF (138 aa)) form the MGS-like domain. The tract at residues 967–1104 (ERLPLTGTVF…KTIQEYCPNF (138 aa)) is allosteric domain.

The protein belongs to the CarB family. In terms of assembly, composed of two chains; the small (or glutamine) chain promotes the hydrolysis of glutamine to ammonia, which is used by the large (or ammonia) chain to synthesize carbamoyl phosphate. Tetramer of heterodimers (alpha,beta)4. It depends on Mg(2+) as a cofactor. The cofactor is Mn(2+).

It catalyses the reaction hydrogencarbonate + L-glutamine + 2 ATP + H2O = carbamoyl phosphate + L-glutamate + 2 ADP + phosphate + 2 H(+). It carries out the reaction hydrogencarbonate + NH4(+) + 2 ATP = carbamoyl phosphate + 2 ADP + phosphate + 2 H(+). The protein operates within amino-acid biosynthesis; L-arginine biosynthesis; carbamoyl phosphate from bicarbonate: step 1/1. Its pathway is pyrimidine metabolism; UMP biosynthesis via de novo pathway; (S)-dihydroorotate from bicarbonate: step 1/3. Functionally, large subunit of the glutamine-dependent carbamoyl phosphate synthetase (CPSase). CPSase catalyzes the formation of carbamoyl phosphate from the ammonia moiety of glutamine, carbonate, and phosphate donated by ATP, constituting the first step of 2 biosynthetic pathways, one leading to arginine and/or urea and the other to pyrimidine nucleotides. The large subunit (synthetase) binds the substrates ammonia (free or transferred from glutamine from the small subunit), hydrogencarbonate and ATP and carries out an ATP-coupled ligase reaction, activating hydrogencarbonate by forming carboxy phosphate which reacts with ammonia to form carbamoyl phosphate. This is Carbamoyl phosphate synthase large chain from Nostoc sp. (strain PCC 7120 / SAG 25.82 / UTEX 2576).